Reading from the N-terminus, the 299-residue chain is Hemolysin C homolog (299 aa).

CBS domains follow at residues 80–142 and 145–202; these read MVPR…NGRL and LIRK…IDDE.

Belongs to the UPF0053 family. Hemolysin C subfamily.

The polypeptide is Hemolysin C homolog (tlyC) (Rickettsia rickettsii (strain Sheila Smith)).